A 961-amino-acid polypeptide reads, in one-letter code: Outer capsid protein VP2 (961 aa).

The protein belongs to the orbivirus VP2 family.

The protein localises to the virion. Its function is as follows. The VP2 protein is one of the two proteins (with VP5) target of the host immunogenic response. Responsible for viral which constitute the virus particle outer capsid. It is the major attachment to target host cell, probably by binding to sialic acid. This attachment induces virion internalization predominantly through clathrin-dependent endocytosis. The sequence is that of Outer capsid protein VP2 (Segment-2) from Bluetongue virus 1 (isolate South Africa) (BTV 1).